Reading from the N-terminus, the 490-residue chain is MTAFRFDNSYARLPANFYARVQPTPVAEPWLIKLNRPLAGELGLDAEALERDGAAIFSGNLVPEGAEPLAMAYAGHQFGTFVPQLGDGRAILLGEVTDAGGRRRDIQLKGAGQTPYSRRGDGRAALGPVLREYIVSEAMHALGVPTTRALAATATGQPVYREQILPGAVFTRVAASHIRVGTFQFFAARGDMESIRTLADYVIGRHYPELKTDEKPYLALLKAVAARQAALIARWLHVGFIHGVMNTDNMTISGETIDFGPCAFMDDYDPKTVFSSIDQFGRYAYANQPAIGQWNLARLAETLVTLFDPVADTAVNLANDALGEYGTIFQKHWLDGMRRKIGLLTDEDEDLDLVQSLLTLMQNGKADFTLTFRRLAASAENATADTELASLFEEPQALSPWLEHWRRRLEREPQPATERAAAMRSVNPAFIPRNHRVEQAIAAATEDADFSLFEALLDVTSRPYEDQPGHAAYAAPPEPGEEVLQTFCGT.

Glycine 86, glycine 88, arginine 89, lysine 109, aspartate 121, glycine 122, arginine 172, and arginine 179 together coordinate ATP. The active-site Proton acceptor is aspartate 248. Residues asparagine 249 and aspartate 258 each contribute to the Mg(2+) site. Residue aspartate 258 participates in ATP binding.

Belongs to the SELO family. It depends on Mg(2+) as a cofactor. Mn(2+) serves as cofactor.

It catalyses the reaction L-seryl-[protein] + ATP = 3-O-(5'-adenylyl)-L-seryl-[protein] + diphosphate. It carries out the reaction L-threonyl-[protein] + ATP = 3-O-(5'-adenylyl)-L-threonyl-[protein] + diphosphate. The catalysed reaction is L-tyrosyl-[protein] + ATP = O-(5'-adenylyl)-L-tyrosyl-[protein] + diphosphate. The enzyme catalyses L-histidyl-[protein] + UTP = N(tele)-(5'-uridylyl)-L-histidyl-[protein] + diphosphate. It catalyses the reaction L-seryl-[protein] + UTP = O-(5'-uridylyl)-L-seryl-[protein] + diphosphate. It carries out the reaction L-tyrosyl-[protein] + UTP = O-(5'-uridylyl)-L-tyrosyl-[protein] + diphosphate. Nucleotidyltransferase involved in the post-translational modification of proteins. It can catalyze the addition of adenosine monophosphate (AMP) or uridine monophosphate (UMP) to a protein, resulting in modifications known as AMPylation and UMPylation. The chain is Protein nucleotidyltransferase YdiU from Rhizobium meliloti (strain 1021) (Ensifer meliloti).